The sequence spans 39 residues: Photosystem II reaction center protein J (39 aa).

The helical transmembrane segment at 9 to 29 (LWLVATVGGIAVITVLGIFIY) threads the bilayer.

It belongs to the PsbJ family. As to quaternary structure, PSII is composed of 1 copy each of membrane proteins PsbA, PsbB, PsbC, PsbD, PsbE, PsbF, PsbH, PsbI, PsbJ, PsbK, PsbL, PsbM, PsbT, PsbX, PsbY, PsbZ, Psb30/Ycf12, at least 3 peripheral proteins of the oxygen-evolving complex and a large number of cofactors. It forms dimeric complexes.

The protein resides in the plastid. The protein localises to the chloroplast thylakoid membrane. Functionally, one of the components of the core complex of photosystem II (PSII). PSII is a light-driven water:plastoquinone oxidoreductase that uses light energy to abstract electrons from H(2)O, generating O(2) and a proton gradient subsequently used for ATP formation. It consists of a core antenna complex that captures photons, and an electron transfer chain that converts photonic excitation into a charge separation. This is Photosystem II reaction center protein J from Gracilaria tenuistipitata var. liui (Red alga).